The primary structure comprises 157 residues: Arginine repressor (157 aa).

This sequence belongs to the ArgR family.

The protein localises to the cytoplasm. The protein operates within amino-acid biosynthesis; L-arginine biosynthesis [regulation]. In terms of biological role, regulates arginine biosynthesis genes. This chain is Arginine repressor, found in Deinococcus radiodurans (strain ATCC 13939 / DSM 20539 / JCM 16871 / CCUG 27074 / LMG 4051 / NBRC 15346 / NCIMB 9279 / VKM B-1422 / R1).